A 239-amino-acid chain; its full sequence is Leucine rich adaptor protein 1 (239 aa).

LRR repeat units lie at residues 55–83 and 93–114; these read LGDKIMALRMELAYLRAIDVKILQQLVTL and LLEERGTLTSHCSSLTSSQYSL. Residues 105-116 show a composition bias toward low complexity; the sequence is SSLTSSQYSLTG. Residues 105–138 are disordered; the sequence is SSLTSSQYSLTGGSPGRSRRGSWDSLPDTSSTDR. A phosphoserine mark is found at S118, S126, and S129.

In terms of assembly, forms a tripartite complex with CDC42BPA/CDC42BPB and MYO18A acting as an adapter connecting both. Its binding to CDC42BPA/CDC42BPB results in their activation by abolition of their negative autoregulation. Interacts with CDC42BPA and CDC42BPB. Post-translationally, phosphorylated.

The protein localises to the cytoplasm. Acts as an activator of the canonical NF-kappa-B pathway and drive the production of pro-inflammatory cytokines. Promotes the antigen (Ag)-presenting and priming function of dendritic cells via the canonical NF-kappa-B pathway. In concert with MYO18A and CDC42BPA/CDC42BPB, is involved in modulating lamellar actomyosin retrograde flow that is crucial to cell protrusion and migration. Activates CDC42BPA/CDC42BPB and targets it to actomyosin through its interaction with MYO18A, leading to MYL9/MLC2 phosphorylation and MYH9/MYH10-dependent actomyosin assembly in the lamella. In Mus musculus (Mouse), this protein is Leucine rich adaptor protein 1 (Lurap1).